A 121-amino-acid polypeptide reads, in one-letter code: Small ribosomal subunit protein uS13 (121 aa).

Residues 94–121 are disordered; that stretch reads GLPVRGQSSKTNARTVKGPRKTVANKKK. Residues 110–121 are compositionally biased toward basic residues; sequence KGPRKTVANKKK.

This sequence belongs to the universal ribosomal protein uS13 family. Part of the 30S ribosomal subunit. Forms a loose heterodimer with protein S19. Forms two bridges to the 50S subunit in the 70S ribosome.

In terms of biological role, located at the top of the head of the 30S subunit, it contacts several helices of the 16S rRNA. In the 70S ribosome it contacts the 23S rRNA (bridge B1a) and protein L5 of the 50S subunit (bridge B1b), connecting the 2 subunits; these bridges are implicated in subunit movement. Contacts the tRNAs in the A and P-sites. This Mesoplasma florum (strain ATCC 33453 / NBRC 100688 / NCTC 11704 / L1) (Acholeplasma florum) protein is Small ribosomal subunit protein uS13.